A 98-amino-acid chain; its full sequence is Small ribosomal subunit protein uS17 (98 aa).

It belongs to the universal ribosomal protein uS17 family. In terms of assembly, part of the 30S ribosomal subunit.

Its function is as follows. One of the primary rRNA binding proteins, it binds specifically to the 5'-end of 16S ribosomal RNA. The polypeptide is Small ribosomal subunit protein uS17 (Carboxydothermus hydrogenoformans (strain ATCC BAA-161 / DSM 6008 / Z-2901)).